A 330-amino-acid chain; its full sequence is Glucosyltransferase 3 (330 aa).

Threonine 16 is a UDP binding site. The substrate protein-binding loop stretch occupies residues 106–111; that stretch reads MFSGNF. Residues arginine 179, 211–214, and 244–249 contribute to the UDP site; these read YRPD and SYKLGS.

Belongs to the Gtf3 glucosyltransferase family. As to quaternary structure, homotetramer; a dimer of dimers. Requires In vitro glycosyltransferase activity is metal-independent. as cofactor.

The protein operates within protein modification; protein glycosylation. Its function is as follows. Required for polymorphic O-glycosylation of the serine-rich repeat protein Fap1. Catalyzes the second step in glycosylation of the serine-rich repeat protein in this bacteria. Transfers glucose from UDP-glucose to the terminal GlcNAc moiety of 3-O-(N-acetyl-alpha-D-glucosaminyl)-L-seryl-[protein] which results from the first glycosylation step of Fap1; does not use other sugar nucleotides as substrates. This chain is Glucosyltransferase 3, found in Streptococcus parasanguinis.